The sequence spans 762 residues: Lysyl oxidase homolog 2B (762 aa).

A signal peptide spans 1–20 (MLALWSISFVLLCSWRLSYA). 4 consecutive SRCR domains span residues 53-154 (LRLA…VVCS), 183-292 (IRPI…VSCI), 316-417 (VRLR…VKCN), and 427-536 (LRLS…VSCS). Disulfide bonds link cysteine 79–cysteine 143, cysteine 92–cysteine 153, cysteine 123–cysteine 133, cysteine 213–cysteine 281, cysteine 226–cysteine 291, cysteine 260–cysteine 270, cysteine 341–cysteine 406, cysteine 354–cysteine 416, and cysteine 385–cysteine 395. The N-linked (GlcNAc...) asparagine glycan is linked to asparagine 278. An N-linked (GlcNAc...) asparagine glycan is attached at asparagine 447. 3 disulfides stabilise this stretch: cysteine 456–cysteine 522, cysteine 469–cysteine 535, and cysteine 503–cysteine 513. The lysyl-oxidase like stretch occupies residues 540–742 (PDLVLNPQVV…WMYNCHIGGS (203 aa)). Residues aspartate 541 and leucine 542 each coordinate Ca(2+). Disulfide bonds link cysteine 565–cysteine 616, cysteine 571–cysteine 686, cysteine 648–cysteine 664, and cysteine 654–cysteine 676. Residues histidine 617, histidine 619, and histidine 621 each contribute to the Cu cation site. Asparagine 635 carries an N-linked (GlcNAc...) asparagine glycan. A cross-link (lysine tyrosylquinone (Lys-Tyr)) is located at residues 644 to 680 (KASFCLEDSECDEGIEKRYECANFGEQGITVGCWDTY). Residue tyrosine 680 is modified to 2',4',5'-topaquinone. Ca(2+) contacts are provided by glutamate 713, aspartate 715, asparagine 718, and asparagine 719. Cysteine 723 and cysteine 737 are disulfide-bonded.

This sequence belongs to the lysyl oxidase family. Cu cation serves as cofactor. The cofactor is lysine tyrosylquinone residue. Post-translationally, the lysine tyrosylquinone cross-link (LTQ) is generated by condensation of the epsilon-amino group of a lysine with a topaquinone produced by oxidation of tyrosine.

Its subcellular location is the secreted. It is found in the extracellular space. The protein localises to the extracellular matrix. The protein resides in the basement membrane. It localises to the nucleus. Its subcellular location is the chromosome. It is found in the endoplasmic reticulum. It catalyses the reaction L-lysyl-[protein] + O2 + H2O = (S)-2-amino-6-oxohexanoyl-[protein] + H2O2 + NH4(+). Functionally, mediates the post-translational oxidative deamination of lysine residues on target proteins leading to the formation of deaminated lysine (allysine). Acts as a transcription corepressor and specifically mediates deamination of trimethylated 'Lys-4' of histone H3 (H3K4me3), a specific tag for epigenetic transcriptional activation. Shows no activity against histone H3 when it is trimethylated on 'Lys-9' (H3K9me3) or 'Lys-27' (H3K27me3) or when 'Lys-4' is monomethylated (H3K4me1) or dimethylated (H3K4me2). Also mediates deamination of methylated TAF10, a member of the transcription factor IID (TFIID) complex, which induces release of TAF10 from promoters, leading to inhibition of TFIID-dependent transcription. LOXL2-mediated deamination of TAF10 results in transcriptional repression of genes required for embryonic stem cell pluripotency. Involved in epithelial to mesenchymal transition (EMT) and participates in repression of E-cadherin, probably by mediating deamination of histone H3. When secreted into the extracellular matrix, promotes cross-linking of extracellular matrix proteins by mediating oxidative deamination of peptidyl lysine residues in precursors to fibrous collagen and elastin. Acts as a regulator of sprouting angiogenesis, probably via collagen IV scaffolding. Acts as a regulator of chondrocyte differentiation, probably by regulating expression of factors that control chondrocyte differentiation. Required with loxl2a for correct expression of Sox2 and for neural differentiation. This is Lysyl oxidase homolog 2B (loxl2b) from Danio rerio (Zebrafish).